Here is a 561-residue protein sequence, read N- to C-terminus: Shugoshin 1 (561 aa).

A necessary for interaction with PPP2CA and PPP2R1A region spans residues 1–176; the sequence is MAKERCLKKS…DTLGVDFDSG (176 aa). The stretch at 7-89 forms a coiled coil; sequence LKKSFQDSLE…DIILQLRKEC (83 aa). Phosphoserine; by NEK2 is present on Ser-14. The D-box 1 motif lies at 192–200; that stretch reads RSSLKKHCN. Residue Ser-256 is modified to Phosphoserine. Disordered stretches follow at residues 260–331 and 348–441; these read IQPG…SVSS and FRQK…HLSL. Positions 267–296 are enriched in basic and acidic residues; sequence KTKEDILESKSEQTKSKQRDTQERKREEKR. A coiled-coil region spans residues 273–313; it reads LESKSEQTKSKQRDTQERKREEKRKANRRKSKRMSKYKENK. A compositionally biased stretch (basic residues) spans 297 to 307; that stretch reads KANRRKSKRMS. Over residues 308 to 318 the composition is skewed to basic and acidic residues; the sequence is KYKENKSENKK. Residues 310–312 carry the KEN box motif; the sequence is KEN. Positions 364-375 are enriched in low complexity; the sequence is SEVSLCESSGSG. Over residues 388 to 398 the composition is skewed to polar residues; it reads YIQNPTSNSDR. The segment covering 410–421 has biased composition (basic and acidic residues); the sequence is KYTDEKETEGSK. The segment covering 422-433 has biased composition (low complexity); sequence PTKTPTTTPPET. Ser-436 is subject to Phosphoserine. The D-box 2 signature appears at 438–446; the sequence is HLSLKDITN. A PXVXL/I motif motif is present at residues 451 to 455; that stretch reads PVVKI. The D-box 3 signature appears at 457 to 465; the sequence is RLSLSPKKN. At Ser-507 the chain carries Phosphoserine; by NEK2.

This sequence belongs to the shugoshin family. In terms of assembly, interacts with PPP2CA (or PPP2CB), PPP2R1B, PPP2R5A, PPP2R5B, PPP2R5C, PPP2R5D, PPP2R5E, SET, LRRC59, RBM10 (or RBM5), RPL10A, RPL28, RPL7, RPL7A and RPLP1. Interaction with protein phosphatase 2A occurs most probably through direct binding to the regulatory B56 subunits: PPP2R1B, PPP2R5A, PPP2R5B, PPP2R5C, PPP2R5D, PPP2R5E. Interacts with PPP2R1A and NEK2. Isoform 3 interacts with PLK1. Interacts with CDCA8. Ubiquitinated and degraded during mitotic exit by APC/C-Cdh1. Post-translationally, phosphorylation by NEK2 is essential for chromosome congression in mitosis and for the proper attachment of spindle microtubule to the kinetochore. Phosphorylated by PLK1 and AUKRB. In terms of tissue distribution, widely expressed. Highly expressed in testis. Expressed in lung, small intestine, breast, liver and placenta. Strongly overexpressed in 90% of breast cancers tested.

It localises to the nucleus. It is found in the chromosome. The protein localises to the centromere. Its subcellular location is the kinetochore. The protein resides in the cytoplasm. It localises to the cytoskeleton. It is found in the spindle pole. The protein localises to the microtubule organizing center. Its subcellular location is the centrosome. The protein resides in the nucleus speckle. In terms of biological role, plays a central role in chromosome cohesion during mitosis by preventing premature dissociation of cohesin complex from centromeres after prophase, when most of cohesin complex dissociates from chromosomes arms. May act by preventing phosphorylation of the STAG2 subunit of cohesin complex at the centromere, ensuring cohesin persistence at centromere until cohesin cleavage by ESPL1/separase at anaphase. Essential for proper chromosome segregation during mitosis and this function requires interaction with PPP2R1A. Its phosphorylated form is necessary for chromosome congression and for the proper attachment of spindle microtubule to the kinetochore. Necessary for kinetochore localization of PLK1 and CENPF. May play a role in the tension sensing mechanism of the spindle-assembly checkpoint by regulating PLK1 kinetochore affinity. Isoform 3 plays a role in maintaining centriole cohesion involved in controlling spindle pole integrity. Involved in centromeric enrichment of AUKRB in prometaphase. This chain is Shugoshin 1, found in Homo sapiens (Human).